We begin with the raw amino-acid sequence, 130 residues long: Small ribosomal subunit protein uS8 (130 aa).

This sequence belongs to the universal ribosomal protein uS8 family.

This Kluyveromyces marxianus (Yeast) protein is Small ribosomal subunit protein uS8 (RPS22).